The following is a 623-amino-acid chain: V-type proton ATPase catalytic subunit A (623 aa).

Position 252–259 (Gly252–Thr259) interacts with ATP.

It belongs to the ATPase alpha/beta chains family. In terms of assembly, V-ATPase is a heteromultimeric enzyme composed of a peripheral catalytic V1 complex (components A to H) attached to an integral membrane V0 proton pore complex (components: a, c, c'', d and e). Binds to the deubiquitinating enzyme AMSH3.

The protein resides in the vacuole membrane. The enzyme catalyses ATP + H2O + 4 H(+)(in) = ADP + phosphate + 5 H(+)(out). Catalytic subunit of the peripheral V1 complex of vacuolar ATPase. V-ATPase vacuolar ATPase is responsible for acidifying a variety of intracellular compartments in eukaryotic cells. The protein is V-type proton ATPase catalytic subunit A (VHA-A) of Arabidopsis thaliana (Mouse-ear cress).